Here is a 1500-residue protein sequence, read N- to C-terminus: Secreted chitinase LysM12 (1500 aa).

Positions 1-23 (MAPLWNGMAAGLLLSAAVVSGQA) are cleaved as a signal peptide. Asparagine 53, asparagine 225, asparagine 251, and asparagine 270 each carry an N-linked (GlcNAc...) asparagine glycan. LysM domains are found at residues 303–348 (RTQK…HVCC) and 367–415 (ATTT…VICI). Residues 428–496 (DAECGPQVPG…TNGCISHCGM (69 aa)) enclose the Chitin-binding type-1 domain. Cystine bridges form between cysteine 431/cysteine 459, cysteine 453/cysteine 465, cysteine 458/cysteine 472, and cysteine 490/cysteine 494. One can recognise a GH18 domain in the interval 507-879 (FRSVGYYESY…PGMILQMKSG (373 aa)). Glutamate 625 serves as the catalytic Proton donor. Tyrosine 626 is a chitin binding site. Asparagine 721 and asparagine 800 each carry an N-linked (GlcNAc...) asparagine glycan. Tryptophan 852 contacts chitin. N-linked (GlcNAc...) asparagine glycans are attached at residues asparagine 892 and asparagine 983. Residues 1164 to 1193 (IPKDIPYPDKTKRKDKDDDDNKKTEATDSE) are disordered. Over residues 1169–1193 (PYPDKTKRKDKDDDDNKKTEATDSE) the composition is skewed to basic and acidic residues.

Belongs to the glycosyl hydrolase 18 family. Chitinase class V subfamily.

The protein localises to the secreted. The catalysed reaction is Random endo-hydrolysis of N-acetyl-beta-D-glucosaminide (1-&gt;4)-beta-linkages in chitin and chitodextrins.. In terms of biological role, secreted chitinase involved in the degradation of chitin, a component of the cell walls of fungi and exoskeletal elements of some animals (including worms and arthropods). Involved in pathogenesis via manipulation of host defenses for successful infection. This chain is Secreted chitinase LysM12, found in Penicillium expansum (Blue mold rot fungus).